The sequence spans 382 residues: GTPase Obg (382 aa).

One can recognise an Obg domain in the interval 2-161; it reads VKFADESKIR…REIIVELNII (160 aa). The OBG-type G domain maps to 162-328; the sequence is ADIGLVGFPN…VKKAFIRLAD (167 aa). GTP-binding positions include 168-175, 193-197, 215-218, 282-285, and 309-311; these read GFPNAGKS, FTTKI, DIPG, TKLD, and SLY. 2 residues coordinate Mg(2+): S175 and T195. Residues 360 to 382 are disordered; the sequence is EEKNDDEHFGATVSLSRKRKPKK.

The protein belongs to the TRAFAC class OBG-HflX-like GTPase superfamily. OBG GTPase family. In terms of assembly, monomer. It depends on Mg(2+) as a cofactor.

The protein localises to the cytoplasm. Its function is as follows. An essential GTPase which binds GTP, GDP and possibly (p)ppGpp with moderate affinity, with high nucleotide exchange rates and a fairly low GTP hydrolysis rate. Plays a role in control of the cell cycle, stress response, ribosome biogenesis and in those bacteria that undergo differentiation, in morphogenesis control. This Treponema denticola (strain ATCC 35405 / DSM 14222 / CIP 103919 / JCM 8153 / KCTC 15104) protein is GTPase Obg.